Consider the following 335-residue polypeptide: Phosphate acyltransferase (335 aa).

The protein belongs to the PlsX family. Homodimer. Probably interacts with PlsY.

It localises to the cytoplasm. It carries out the reaction a fatty acyl-[ACP] + phosphate = an acyl phosphate + holo-[ACP]. The protein operates within lipid metabolism; phospholipid metabolism. In terms of biological role, catalyzes the reversible formation of acyl-phosphate (acyl-PO(4)) from acyl-[acyl-carrier-protein] (acyl-ACP). This enzyme utilizes acyl-ACP as fatty acyl donor, but not acyl-CoA. The polypeptide is Phosphate acyltransferase (Streptococcus equi subsp. zooepidemicus (strain H70)).